The primary structure comprises 1756 residues: RANBP2-like and GRIP domain-containing protein 2 (1756 aa).

Serine 21 carries the phosphoserine modification. TPR repeat units lie at residues 59–92, 583–616, and 647–680; these read PRAH…NPPQ, QKMG…LKII, and EDAH…VSYW. Residues 759 to 804 are disordered; it reads GPLYKNGSLRNADSEIKHSTPSPTKYSLSPSKSYKYSPKTPPRWAE. Residues 777–796 show a composition bias toward low complexity; sequence STPSPTKYSLSPSKSYKYSP. The RanBD1 1 domain occupies 1029–1165; that stretch reads HFEPVVQMPE…FEECQRLLLD (137 aa). Disordered regions lie at residues 1206-1241 and 1299-1324; these read TKVT…TLEW and AKLN…ERDG. Over residues 1228–1237 the composition is skewed to polar residues; sequence IKPNPENTGP. Positions 1310-1322 are enriched in acidic residues; sequence TDEESDVTQEEER. The RanBD1 2 domain maps to 1326 to 1462; sequence YFEPVVPLPD…FDEAKTAQEK (137 aa). Residues 1573–1586 are compositionally biased toward polar residues; that stretch reads NDSETSSVAQSGSE. Residues 1573-1614 are disordered; it reads NDSETSSVAQSGSESKVEPKKCELSKNSDIEQSSDSKVKNLS. A compositionally biased stretch (basic and acidic residues) spans 1587–1610; sequence SKVEPKKCELSKNSDIEQSSDSKV. The GRIP domain occupies 1693–1743; it reads QEESAANVEHLKNVLLQFIFLKPGSERESLLPVINTMLQLSPEEKGKLAAV.

The chain is RANBP2-like and GRIP domain-containing protein 2 (RGPD2) from Homo sapiens (Human).